Consider the following 373-residue polypeptide: Queuine tRNA-ribosyltransferase (373 aa).

Asp-93 serves as the catalytic Proton acceptor. Residues 93–97 (DSGGF), Asp-147, Gln-190, and Gly-219 contribute to the substrate site. The interval 250 to 256 (GVGEPVD) is RNA binding. Residue Asp-269 is the Nucleophile of the active site. The interval 274-278 (TRLAR) is RNA binding; important for wobble base 34 recognition. Zn(2+) contacts are provided by Cys-307, Cys-309, Cys-312, and His-338.

The protein belongs to the queuine tRNA-ribosyltransferase family. Homodimer. Within each dimer, one monomer is responsible for RNA recognition and catalysis, while the other monomer binds to the replacement base PreQ1. Zn(2+) serves as cofactor.

It carries out the reaction 7-aminomethyl-7-carbaguanine + guanosine(34) in tRNA = 7-aminomethyl-7-carbaguanosine(34) in tRNA + guanine. It participates in tRNA modification; tRNA-queuosine biosynthesis. In terms of biological role, catalyzes the base-exchange of a guanine (G) residue with the queuine precursor 7-aminomethyl-7-deazaguanine (PreQ1) at position 34 (anticodon wobble position) in tRNAs with GU(N) anticodons (tRNA-Asp, -Asn, -His and -Tyr). Catalysis occurs through a double-displacement mechanism. The nucleophile active site attacks the C1' of nucleotide 34 to detach the guanine base from the RNA, forming a covalent enzyme-RNA intermediate. The proton acceptor active site deprotonates the incoming PreQ1, allowing a nucleophilic attack on the C1' of the ribose to form the product. After dissociation, two additional enzymatic reactions on the tRNA convert PreQ1 to queuine (Q), resulting in the hypermodified nucleoside queuosine (7-(((4,5-cis-dihydroxy-2-cyclopenten-1-yl)amino)methyl)-7-deazaguanosine). This Fusobacterium nucleatum subsp. nucleatum (strain ATCC 25586 / DSM 15643 / BCRC 10681 / CIP 101130 / JCM 8532 / KCTC 2640 / LMG 13131 / VPI 4355) protein is Queuine tRNA-ribosyltransferase.